The sequence spans 527 residues: Glucose-6-phosphate isomerase (527 aa).

Glutamate 323 (proton donor) is an active-site residue. Catalysis depends on residues histidine 352 and lysine 454.

The protein belongs to the GPI family.

It localises to the cytoplasm. It catalyses the reaction alpha-D-glucose 6-phosphate = beta-D-fructose 6-phosphate. Its pathway is carbohydrate biosynthesis; gluconeogenesis. It participates in carbohydrate degradation; glycolysis; D-glyceraldehyde 3-phosphate and glycerone phosphate from D-glucose: step 2/4. Catalyzes the reversible isomerization of glucose-6-phosphate to fructose-6-phosphate. This Prochlorococcus marinus (strain MIT 9515) protein is Glucose-6-phosphate isomerase.